The following is a 512-amino-acid chain: Spastin homolog (512 aa).

The Cytoplasmic segment spans residues 1–274 (MFAFSKGPAG…FKGLRQPVKG (274 aa)). Positions 32-97 (IEMDELTKHA…MKLEKSAQDR (66 aa)) form a coiled coil. A disordered region spans residues 110–182 (KQSRSATVGP…SDTVHPEPPV (73 aa)). An MTBD region spans residues 115–233 (ATVGPSRPAS…ERLLDEVLDN (119 aa)). The segment covering 137–163 (APEKKNAAKAKENDENRHVCSRGDRCG) has biased composition (basic and acidic residues). An intramembrane region (helical) is located at residues 275–294 (ILLFGPPGNGKTLLAKAVAG). 279-286 (GPPGNGKT) is a binding site for ATP. At 295–512 (ESKQMFFNIS…LSDFSRSFGC (218 aa)) the chain is on the cytoplasmic side.

The protein belongs to the AAA ATPase family. Spastin subfamily. Homohexamer. The homohexamer is stabilized by ATP-binding. The homohexamer may adopt a ring conformation through which microtubules pass prior to being severed. Interacts with microtubules. Interacts (via N-terminus) with tubulin; the interaction is direct.

It is found in the membrane. Its subcellular location is the cytoplasm. The protein localises to the cytoskeleton. It localises to the perinuclear region. It catalyses the reaction n ATP + n H2O + a microtubule = n ADP + n phosphate + (n+1) alpha/beta tubulin heterodimers.. In terms of biological role, ATP-dependent microtubule severing protein that specifically recognizes and cuts microtubules. Probably by regulating microtubule remodeling, plays a role in new synapse formation in GABAergic DD (Dorsal D type) neurons. The chain is Spastin homolog from Caenorhabditis elegans.